The following is a 685-amino-acid chain: DNA ligase (685 aa).

NAD(+) contacts are provided by residues 47 to 51, 96 to 97, and Glu125; these read DSEYD and SL. Residue Lys127 is the N6-AMP-lysine intermediate of the active site. NAD(+) is bound by residues Arg148, Glu185, Lys304, and Lys328. Zn(2+)-binding residues include Cys422, Cys425, Cys440, and Cys446. The region spanning 605–685 is the BRCT domain; that stretch reads ADAQPLKGQT…ALLALFAANR (81 aa).

Belongs to the NAD-dependent DNA ligase family. LigA subfamily. Mg(2+) serves as cofactor. Requires Mn(2+) as cofactor.

It carries out the reaction NAD(+) + (deoxyribonucleotide)n-3'-hydroxyl + 5'-phospho-(deoxyribonucleotide)m = (deoxyribonucleotide)n+m + AMP + beta-nicotinamide D-nucleotide.. DNA ligase that catalyzes the formation of phosphodiester linkages between 5'-phosphoryl and 3'-hydroxyl groups in double-stranded DNA using NAD as a coenzyme and as the energy source for the reaction. It is essential for DNA replication and repair of damaged DNA. In Shewanella sp. (strain W3-18-1), this protein is DNA ligase.